Reading from the N-terminus, the 89-residue chain is Small ribosomal subunit protein uS15 (89 aa).

Belongs to the universal ribosomal protein uS15 family. As to quaternary structure, part of the 30S ribosomal subunit. Forms a bridge to the 50S subunit in the 70S ribosome, contacting the 23S rRNA.

One of the primary rRNA binding proteins, it binds directly to 16S rRNA where it helps nucleate assembly of the platform of the 30S subunit by binding and bridging several RNA helices of the 16S rRNA. In terms of biological role, forms an intersubunit bridge (bridge B4) with the 23S rRNA of the 50S subunit in the ribosome. This chain is Small ribosomal subunit protein uS15, found in Bradyrhizobium sp. (strain ORS 278).